We begin with the raw amino-acid sequence, 299 residues long: Deoxyhypusine hydroxylase (299 aa).

HEAT-like PBS-type repeat units follow at residues 54-80, 87-113, 174-200, 205-231, and 238-264; these read LKHE…VLQD, VRHE…YSED, DRYR…GLRA, FRHE…ALRS, and VRHE…FAQD. 3 residues coordinate Fe cation: His56, His89, and Glu90. Positions 207, 240, and 241 each coordinate Fe cation.

It belongs to the deoxyhypusine hydroxylase family. Fe(2+) is required as a cofactor.

The catalysed reaction is [eIF5A protein]-deoxyhypusine + AH2 + O2 = [eIF5A protein]-hypusine + A + H2O. It functions in the pathway protein modification; eIF5A hypusination. Catalyzes the hydroxylation of the N(6)-(4-aminobutyl)-L-lysine intermediate produced by deoxyhypusine synthase/DHPS on a critical lysine of the eukaryotic translation initiation factor 5A/eIF-5A. This is the second step of the post-translational modification of that lysine into an unusual amino acid residue named hypusine. Hypusination is unique to mature eIF-5A factor and is essential for its function. This is Deoxyhypusine hydroxylase from Gallus gallus (Chicken).